The sequence spans 482 residues: tRNA modification GTPase MnmE (482 aa).

Positions 25, 82, and 135 each coordinate (6S)-5-formyl-5,6,7,8-tetrahydrofolate. Residues 231 to 404 enclose the TrmE-type G domain; the sequence is GIKVVIAGQP…LRRVLLDIAG (174 aa). A K(+)-binding site is contributed by N241. GTP is bound by residues 241-246, 260-266, 285-288, and 385-387; these read NAGKSS, TPIAGTT, DTAG, and SAR. Residue S245 coordinates Mg(2+). K(+) is bound by residues T260, I262, and T265. Residue T266 coordinates Mg(2+). K482 lines the (6S)-5-formyl-5,6,7,8-tetrahydrofolate pocket.

Belongs to the TRAFAC class TrmE-Era-EngA-EngB-Septin-like GTPase superfamily. TrmE GTPase family. In terms of assembly, homodimer. Heterotetramer of two MnmE and two MnmG subunits. It depends on K(+) as a cofactor.

The protein localises to the cytoplasm. Functionally, exhibits a very high intrinsic GTPase hydrolysis rate. Involved in the addition of a carboxymethylaminomethyl (cmnm) group at the wobble position (U34) of certain tRNAs, forming tRNA-cmnm(5)s(2)U34. The protein is tRNA modification GTPase MnmE of Paracidovorax citrulli (strain AAC00-1) (Acidovorax citrulli).